Reading from the N-terminus, the 350-residue chain is NADH-quinone oxidoreductase subunit H (350 aa).

Helical transmembrane passes span 31–51 (LMLL…LFLI), 102–122 (LLAP…IPFG), 132–152 (LGVL…WMAG), 171–191 (MLSY…MAGS), 205–225 (WFIF…NAEF), 263–283 (FMIG…APFG), 286–306 (FIPS…LYMW), and 322–342 (FAWK…GFGL).

The protein belongs to the complex I subunit 1 family. In terms of assembly, NDH-1 is composed of 14 different subunits. Subunits NuoA, H, J, K, L, M, N constitute the membrane sector of the complex.

The protein resides in the cell membrane. The enzyme catalyses a quinone + NADH + 5 H(+)(in) = a quinol + NAD(+) + 4 H(+)(out). Functionally, NDH-1 shuttles electrons from NADH, via FMN and iron-sulfur (Fe-S) centers, to quinones in the respiratory chain. The immediate electron acceptor for the enzyme in this species is believed to be ubiquinone. Couples the redox reaction to proton translocation (for every two electrons transferred, four hydrogen ions are translocated across the cytoplasmic membrane), and thus conserves the redox energy in a proton gradient. This subunit may bind ubiquinone. The polypeptide is NADH-quinone oxidoreductase subunit H (Carboxydothermus hydrogenoformans (strain ATCC BAA-161 / DSM 6008 / Z-2901)).